A 357-amino-acid polypeptide reads, in one-letter code: DNA integrity scanning protein DisA (357 aa).

Positions 8 to 146 constitute a DAC domain; sequence VKSMINILQL…GNLRYTLKDI (139 aa). ATP contacts are provided by residues Gly-75, Leu-93, and 106–110; that span reads MRHRT.

The protein belongs to the DisA family. As to quaternary structure, homooctamer. Requires Mg(2+) as cofactor.

It catalyses the reaction 2 ATP = 3',3'-c-di-AMP + 2 diphosphate. Participates in a DNA-damage check-point that is active prior to asymmetric division when DNA is damaged. DisA forms globular foci that rapidly scan along the chromosomes during sporulation, searching for lesions. When a lesion is present, DisA pauses at the lesion site. This triggers a cellular response that culminates in a temporary block in sporulation initiation. In terms of biological role, also has diadenylate cyclase activity, catalyzing the condensation of 2 ATP molecules into cyclic di-AMP (c-di-AMP). c-di-AMP acts as a signaling molecule that couples DNA integrity with progression of sporulation. The rise in c-di-AMP level generated by DisA while scanning the chromosome, operates as a positive signal that advances sporulation; upon encountering a lesion, the DisA focus arrests at the damaged site and halts c-di-AMP synthesis. This is DNA integrity scanning protein DisA from Bacillus anthracis (strain CDC 684 / NRRL 3495).